Here is a 224-residue protein sequence, read N- to C-terminus: MSLQEFHNVEDAVKLLKCYNLNDKNLDSKIIVGFVFNKTKSISKKRVKIEQGYLTELGKESFSFPNFFGKSPEIALFTTKKLDNFSTIDYVGSDDLIKKIEDNSIKPNYLIVLKDEVGSLAKYSRVLGPKGLMPTPKQGTVVENNNILLSTIETLKKGSFRIKVNKYNMIQMSVGNLTMNTDQILENIKSLLLYIQNRLPVSYRKTSLKKIYVTMTHGPSFIIN.

The protein belongs to the universal ribosomal protein uL1 family.

The protein localises to the mitochondrion. The protein is Large ribosomal subunit protein uL1m (RPL1) of Reclinomonas americana.